The chain runs to 410 residues: Arginine deiminase (410 aa).

The active-site Amidino-cysteine intermediate is the Cys400.

The protein belongs to the arginine deiminase family.

It is found in the cytoplasm. The catalysed reaction is L-arginine + H2O = L-citrulline + NH4(+). It participates in amino-acid degradation; L-arginine degradation via ADI pathway; carbamoyl phosphate from L-arginine: step 1/2. The polypeptide is Arginine deiminase (Lactococcus lactis subsp. cremoris (strain MG1363)).